Here is a 151-residue protein sequence, read N- to C-terminus: Protein A151R (151 aa).

His102, Cys109, Cys132, and Cys135 together coordinate Zn(2+). Positions 131–135 (WCTKC) match the Thioredoxin WCTKC motif motif.

This sequence belongs to the asfivirus A151R family. As to quaternary structure, monomer. Homodimer. Interacts with protein B119L. Interacts with membrane protein E248R. The cofactor is Zn(2+).

May participate in a redox cascade for the formation of disulfide bonds in viral proteins. In African swine fever virus (strain Badajoz 1971 Vero-adapted) (Ba71V), this protein is Protein A151R.